The chain runs to 238 residues: Flagellar L-ring protein (238 aa).

The N-terminal stretch at 1–23 (MIKLFICQKKYYLTAIFLLTIQS) is a signal peptide. The N-palmitoyl cysteine moiety is linked to residue Cys-24. The S-diacylglycerol cysteine moiety is linked to residue Cys-24.

The protein belongs to the FlgH family. As to quaternary structure, the basal body constitutes a major portion of the flagellar organelle and consists of four rings (L,P,S, and M) mounted on a central rod.

The protein localises to the cell outer membrane. It is found in the bacterial flagellum basal body. Assembles around the rod to form the L-ring and probably protects the motor/basal body from shearing forces during rotation. This Buchnera aphidicola subsp. Acyrthosiphon pisum (strain 5A) protein is Flagellar L-ring protein.